The chain runs to 182 residues: uncharacterized protein (182 aa).

One can recognise a Macro domain in the interval Met-1–Leu-177.

This is an uncharacterized protein from Pyrobaculum aerophilum (strain ATCC 51768 / DSM 7523 / JCM 9630 / CIP 104966 / NBRC 100827 / IM2).